A 246-amino-acid polypeptide reads, in one-letter code: MSIDWFTFTAQVINFLVLVGLLRYFLYAPIVRAMQAREQKVTQCLTDAETAKVEANQQRMSLEKQTQLLQERREELLTKAKADADNERQRLIAEARKEADTRREHWTSTFERDQKDLADQTRRDIQRMGFQAARETVQQLADEDLQKRVCQTFVKQLQTLGEDQLAAIATQLADSGNPVLVRSAKGLDSSDQNQIRDAIHRVFENKVEVRFESEPALIAGIEMDAGGYSLPWNAERTLKTMEANVA.

The chain crosses the membrane as a helical span at residues 5–27 (WFTFTAQVINFLVLVGLLRYFLY).

Belongs to the ATPase B chain family. F-type ATPases have 2 components, F(1) - the catalytic core - and F(0) - the membrane proton channel. F(1) has five subunits: alpha(3), beta(3), gamma(1), delta(1), epsilon(1). F(0) has three main subunits: a(1), b(2) and c(10-14). The alpha and beta chains form an alternating ring which encloses part of the gamma chain. F(1) is attached to F(0) by a central stalk formed by the gamma and epsilon chains, while a peripheral stalk is formed by the delta and b chains.

It localises to the cell inner membrane. F(1)F(0) ATP synthase produces ATP from ADP in the presence of a proton or sodium gradient. F-type ATPases consist of two structural domains, F(1) containing the extramembraneous catalytic core and F(0) containing the membrane proton channel, linked together by a central stalk and a peripheral stalk. During catalysis, ATP synthesis in the catalytic domain of F(1) is coupled via a rotary mechanism of the central stalk subunits to proton translocation. Functionally, component of the F(0) channel, it forms part of the peripheral stalk, linking F(1) to F(0). The polypeptide is ATP synthase subunit b 1 (Rhodopirellula baltica (strain DSM 10527 / NCIMB 13988 / SH1)).